The primary structure comprises 371 residues: GTPase Obg (371 aa).

One can recognise an Obg domain in the interval 1 to 159 (MKFLDQAKVY…KTIWLRLKLI (159 aa)). Positions 160–327 (ADAGLVGLPN…VLRALRDIIV (168 aa)) constitute an OBG-type G domain. Residues 166-173 (GLPNAGKS), 191-195 (FTTLH), 212-215 (DIPG), 279-282 (SQID), and 308-310 (SAI) contribute to the GTP site. 2 residues coordinate Mg(2+): S173 and T193. A disordered region spans residues 337–371 (APMKALKVRHRDMQSSGNEGESEDNSDRDDEEQQG). Acidic residues predominate over residues 356–371 (GESEDNSDRDDEEQQG).

The protein belongs to the TRAFAC class OBG-HflX-like GTPase superfamily. OBG GTPase family. Monomer. Mg(2+) serves as cofactor.

The protein localises to the cytoplasm. Functionally, an essential GTPase which binds GTP, GDP and possibly (p)ppGpp with moderate affinity, with high nucleotide exchange rates and a fairly low GTP hydrolysis rate. Plays a role in control of the cell cycle, stress response, ribosome biogenesis and in those bacteria that undergo differentiation, in morphogenesis control. The polypeptide is GTPase Obg (Rhizobium rhizogenes (strain K84 / ATCC BAA-868) (Agrobacterium radiobacter)).